A 207-amino-acid polypeptide reads, in one-letter code: Putative 3-methyladenine DNA glycosylase (207 aa).

It belongs to the DNA glycosylase MPG family.

This chain is Putative 3-methyladenine DNA glycosylase, found in Listeria welshimeri serovar 6b (strain ATCC 35897 / DSM 20650 / CCUG 15529 / CIP 8149 / NCTC 11857 / SLCC 5334 / V8).